A 117-amino-acid chain; its full sequence is Small ribosomal subunit protein bS6 (117 aa).

It belongs to the bacterial ribosomal protein bS6 family.

In terms of biological role, binds together with bS18 to 16S ribosomal RNA. The polypeptide is Small ribosomal subunit protein bS6 (Roseobacter denitrificans (strain ATCC 33942 / OCh 114) (Erythrobacter sp. (strain OCh 114))).